Here is a 100-residue protein sequence, read N- to C-terminus: uncharacterized protein (100 aa).

The protein resides in the mitochondrion. This is an uncharacterized protein from Arabidopsis thaliana (Mouse-ear cress).